A 427-amino-acid chain; its full sequence is Adenylosuccinate synthetase (427 aa).

Residues 11–17 and 39–41 each bind GTP; these read GDEGKGK and GHT. Asp12 functions as the Proton acceptor in the catalytic mechanism. Mg(2+) contacts are provided by Asp12 and Gly39. IMP-binding positions include 12–15, 37–40, Thr132, Arg146, Gln223, Thr238, and Arg302; these read DEGK and NAGH. The active-site Proton donor is His40. 298–304 contacts substrate; that stretch reads TTTGRPR. GTP is bound by residues Arg304, 330–332, and 412–414; these read KLD and GVG.

It belongs to the adenylosuccinate synthetase family. In terms of assembly, homodimer. Mg(2+) serves as cofactor.

It localises to the cytoplasm. It carries out the reaction IMP + L-aspartate + GTP = N(6)-(1,2-dicarboxyethyl)-AMP + GDP + phosphate + 2 H(+). It participates in purine metabolism; AMP biosynthesis via de novo pathway; AMP from IMP: step 1/2. Functionally, plays an important role in the de novo pathway and in the salvage pathway of purine nucleotide biosynthesis. Catalyzes the first committed step in the biosynthesis of AMP from IMP. This Dictyostelium discoideum (Social amoeba) protein is Adenylosuccinate synthetase (purA).